The sequence spans 396 residues: Elongation factor Tu 1 (396 aa).

In terms of domain architecture, tr-type G spans 10 to 206; sequence KPHVNVGTIG…QIDSYIPEPE (197 aa). The segment at 19–26 is G1; it reads GHIDHGKT. Position 19 to 26 (19 to 26) interacts with GTP; that stretch reads GHIDHGKT. Mg(2+) is bound at residue T26. The interval 60–64 is G2; it reads GITIA. A G3 region spans residues 81 to 84; it reads DCPG. Residues 81-85 and 136-139 each bind GTP; these read DCPGH and NKCD. The interval 136-139 is G4; it reads NKCD. The tract at residues 174–176 is G5; the sequence is SAL.

This sequence belongs to the TRAFAC class translation factor GTPase superfamily. Classic translation factor GTPase family. EF-Tu/EF-1A subfamily. In terms of assembly, monomer.

The protein localises to the cytoplasm. It catalyses the reaction GTP + H2O = GDP + phosphate + H(+). Functionally, GTP hydrolase that promotes the GTP-dependent binding of aminoacyl-tRNA to the A-site of ribosomes during protein biosynthesis. The protein is Elongation factor Tu 1 of Desulfotalea psychrophila (strain LSv54 / DSM 12343).